The chain runs to 178 residues: Large ribosomal subunit protein uL6 (178 aa).

This sequence belongs to the universal ribosomal protein uL6 family. In terms of assembly, part of the 50S ribosomal subunit.

Functionally, this protein binds to the 23S rRNA, and is important in its secondary structure. It is located near the subunit interface in the base of the L7/L12 stalk, and near the tRNA binding site of the peptidyltransferase center. This chain is Large ribosomal subunit protein uL6, found in Campylobacter fetus subsp. fetus (strain 82-40).